The chain runs to 278 residues: MYGGDFDGNAAFAGGGFMPSQATTQAHESSSSLKNRDVRTLLPLTLKQLSSASTTGESNFSIDGVDIKTVVIVGRISRMENRITQVDFVVDDGTGWVDCVRWCHARQETEEMEAVKLGMYVRLHGHLKIFQGKRSVNVFSVRPVTDFNEIVHHFTECMYVHMYNTKLRGGSITQDTATPRPQMPYSTMPTPAKPYQTGPSNQFPNQFNDSMHGVKQTVLNYLNQPMHIVSEAGVHCDIIARELRIPLLQVKEALEQLSNDGCIYSTLDETCFKSTANA.

The OB DNA-binding region spans 70–143 (VVIVGRISRM…RSVNVFSVRP (74 aa)).

It belongs to the replication factor A protein 2 family. In terms of assembly, heterotrimer of RPA1, RPA2 and RPA3 (canonical replication protein A complex). In terms of processing, phosphorylated in a cell-cycle-dependent manner (from the S phase until mitosis). In response to DNA damage, recruited to DNA-repair nuclear foci, as a hypophosphorylated form.

It is found in the nucleus. In terms of biological role, component of the replication protein A complex (RPA) required for DNA recombination, repair and replication. The activity of RPA is mediated by single-stranded DNA binding and protein interactions. Required fo cell division in meristems. Involved in the maintenance of transcriptional epigenetic gene silencing (TGS) at specific loci (including some transposons) by regulating histone H3 acetylation, 'Lys-4' and 'Lys-9' methylation. The sequence is that of Replication protein A 32 kDa subunit B (RPA2B) from Arabidopsis thaliana (Mouse-ear cress).